Consider the following 218-residue polypeptide: Adenylate kinase (218 aa).

10-15 (GAGKGT) serves as a coordination point for ATP. Residues 30–59 (STGDMLRAAVKAGTPLGLQAKAVMDSGSLV) are NMP. Residues Thr-31, Arg-36, 57–59 (SLV), 85–88 (GFPR), and Gln-92 each bind AMP. The segment at 122–159 (GRRSHPASGRTYHVRFNPPKIDGKDDLTGEALLQREDD) is LID. ATP is bound by residues Arg-123 and 132-133 (TY). Residues Arg-156 and Arg-167 each coordinate AMP. Gly-203 contacts ATP.

The protein belongs to the adenylate kinase family. As to quaternary structure, monomer.

It is found in the cytoplasm. It catalyses the reaction AMP + ATP = 2 ADP. The protein operates within purine metabolism; AMP biosynthesis via salvage pathway; AMP from ADP: step 1/1. Catalyzes the reversible transfer of the terminal phosphate group between ATP and AMP. Plays an important role in cellular energy homeostasis and in adenine nucleotide metabolism. The chain is Adenylate kinase from Verminephrobacter eiseniae (strain EF01-2).